Here is an 86-residue protein sequence, read N- to C-terminus: Large ribosomal subunit protein bL31B (86 aa).

Belongs to the bacterial ribosomal protein bL31 family. Type B subfamily. In terms of assembly, part of the 50S ribosomal subunit.

In Cupriavidus metallidurans (strain ATCC 43123 / DSM 2839 / NBRC 102507 / CH34) (Ralstonia metallidurans), this protein is Large ribosomal subunit protein bL31B.